The sequence spans 118 residues: Putative pterin-4-alpha-carbinolamine dehydratase (118 aa).

It belongs to the pterin-4-alpha-carbinolamine dehydratase family.

It carries out the reaction (4aS,6R)-4a-hydroxy-L-erythro-5,6,7,8-tetrahydrobiopterin = (6R)-L-erythro-6,7-dihydrobiopterin + H2O. The protein is Putative pterin-4-alpha-carbinolamine dehydratase of Pseudomonas fluorescens (strain SBW25).